The following is a 269-amino-acid chain: Hydroxyethylthiazole kinase (269 aa).

Met45 is a binding site for substrate. ATP-binding residues include Arg121 and Thr167. Position 194 (Gly194) interacts with substrate.

It belongs to the Thz kinase family. Mg(2+) is required as a cofactor.

The catalysed reaction is 5-(2-hydroxyethyl)-4-methylthiazole + ATP = 4-methyl-5-(2-phosphooxyethyl)-thiazole + ADP + H(+). Its pathway is cofactor biosynthesis; thiamine diphosphate biosynthesis; 4-methyl-5-(2-phosphoethyl)-thiazole from 5-(2-hydroxyethyl)-4-methylthiazole: step 1/1. Its function is as follows. Catalyzes the phosphorylation of the hydroxyl group of 4-methyl-5-beta-hydroxyethylthiazole (THZ). The protein is Hydroxyethylthiazole kinase of Bacillus cereus (strain ATCC 14579 / DSM 31 / CCUG 7414 / JCM 2152 / NBRC 15305 / NCIMB 9373 / NCTC 2599 / NRRL B-3711).